A 414-amino-acid polypeptide reads, in one-letter code: Histidinol dehydrogenase (414 aa).

Residues Y116, Q177, and N200 each coordinate NAD(+). Residues T223, Q245, and H248 each contribute to the substrate site. Q245 and H248 together coordinate Zn(2+). Residues E313 and H314 each act as proton acceptor in the active site. Positions 314, 347, 401, and 406 each coordinate substrate. A Zn(2+)-binding site is contributed by D347. A Zn(2+)-binding site is contributed by H406.

It belongs to the histidinol dehydrogenase family. Zn(2+) is required as a cofactor.

The enzyme catalyses L-histidinol + 2 NAD(+) + H2O = L-histidine + 2 NADH + 3 H(+). It participates in amino-acid biosynthesis; L-histidine biosynthesis; L-histidine from 5-phospho-alpha-D-ribose 1-diphosphate: step 9/9. Functionally, catalyzes the sequential NAD-dependent oxidations of L-histidinol to L-histidinaldehyde and then to L-histidine. The sequence is that of Histidinol dehydrogenase from Staphylococcus epidermidis (strain ATCC 12228 / FDA PCI 1200).